The sequence spans 339 residues: DNA-directed RNA polymerase subunit alpha (339 aa).

The alpha N-terminal domain (alpha-NTD) stretch occupies residues 1 to 233 (MVREEVAGST…DLFLPFLHAE (233 aa)). Residues 264-339 (KKGIPLNCIF…IDLLKNKLSF (76 aa)) form an alpha C-terminal domain (alpha-CTD) region.

It belongs to the RNA polymerase alpha chain family. In terms of assembly, in plastids the minimal PEP RNA polymerase catalytic core is composed of four subunits: alpha, beta, beta', and beta''. When a (nuclear-encoded) sigma factor is associated with the core the holoenzyme is formed, which can initiate transcription.

It is found in the plastid. The protein resides in the chloroplast. The catalysed reaction is RNA(n) + a ribonucleoside 5'-triphosphate = RNA(n+1) + diphosphate. Functionally, DNA-dependent RNA polymerase catalyzes the transcription of DNA into RNA using the four ribonucleoside triphosphates as substrates. This is DNA-directed RNA polymerase subunit alpha from Agropyron cristatum (Crested wheatgrass).